Here is a 631-residue protein sequence, read N- to C-terminus: ATP-dependent zinc metalloprotease FtsH (631 aa).

Residues 1-5 (MKKSN) are Cytoplasmic-facing. Residues 6-26 (PWFVFFWITLLVIVLMFINFA) form a helical membrane-spanning segment. The Periplasmic portion of the chain corresponds to 27-102 (RQGGNEVELE…LEFSATEKSG (76 aa)). The helical transmembrane segment at 103 to 123 (WLGSLLLNWGPVVLLILFCFW) threads the bilayer. The Cytoplasmic segment spans residues 124 to 631 (MMRGMSMGNK…KVINEKVIIS (508 aa)). 196 to 203 (GSPGTGKT) provides a ligand contact to ATP. Zn(2+) is bound at residue histidine 418. Glutamate 419 is a catalytic residue. Zn(2+) is bound by residues histidine 422 and aspartate 494.

In the central section; belongs to the AAA ATPase family. This sequence in the C-terminal section; belongs to the peptidase M41 family. In terms of assembly, homohexamer. The cofactor is Zn(2+).

It is found in the cell inner membrane. Its function is as follows. Acts as a processive, ATP-dependent zinc metallopeptidase for both cytoplasmic and membrane proteins. Plays a role in the quality control of integral membrane proteins. The sequence is that of ATP-dependent zinc metalloprotease FtsH from Endomicrobium trichonymphae.